A 522-amino-acid chain; its full sequence is MKKNLISIDVFLTETRYQPNPTAIFNQICKKKSETLLLESAEINKKHHLESMMIIDAALKISFLNQIVIVEALTKNGVNLLSVFKSLLPKNVIILSDNNPLEIKFPILSMYLDEDQRLRSLSVFDAIRFLIKSVKNLSEFAPKSMFFGGLFSYDLITSFENLPILNTHQHCPDFCFYLSETLLILDHKNKTSIVQVTSFTNDNFEKKRLKDRLEILKNKLSKNLCPIKFDTLKNMKLWCNKTDEEYNKIIVNVKKFILQGEIFQVVPSRKFYLSCVNPLSSYEVLKKNNPSPYMFFMQDRKFTLFGASPESALKYDINSRQIEIYPIAGTRPRGRRSDGSLDLDLDNRIELEMRTNNKELAEHLMLVDLARNDLAKICEPGTRHVADLIRVDRYSHVMHLVSRVIGKLRFDLDFLHAYQACMNMGTLTGAPKVRAMELISEIEGEKRGSYGGAIGYFTGLGMLDTCIVIRSAYVENKIATIQAGAGIVLDSVPQLESDESKNKAKAVIQAIANSHSCQIEYL.

L-tryptophan is bound by residues Ser40 and 292 to 294; that span reads PYM. 329–330 contacts chorismate; the sequence is GT. Residue Glu362 participates in Mg(2+) binding. Chorismate-binding positions include Tyr450, Arg470, 484 to 486, and Gly486; that span reads GAG. A Mg(2+)-binding site is contributed by Glu499.

The protein belongs to the anthranilate synthase component I family. As to quaternary structure, heterotetramer consisting of two non-identical subunits: a beta subunit (TrpG) and a large alpha subunit (TrpE). It depends on Mg(2+) as a cofactor.

It carries out the reaction chorismate + L-glutamine = anthranilate + pyruvate + L-glutamate + H(+). The protein operates within amino-acid biosynthesis; L-tryptophan biosynthesis; L-tryptophan from chorismate: step 1/5. Feedback inhibited by tryptophan. Functionally, part of a heterotetrameric complex that catalyzes the two-step biosynthesis of anthranilate, an intermediate in the biosynthesis of L-tryptophan. In the first step, the glutamine-binding beta subunit (TrpG) of anthranilate synthase (AS) provides the glutamine amidotransferase activity which generates ammonia as a substrate that, along with chorismate, is used in the second step, catalyzed by the large alpha subunit of AS (TrpE) to produce anthranilate. In the absence of TrpG, TrpE can synthesize anthranilate directly from chorismate and high concentrations of ammonia. The protein is Anthranilate synthase component 1 (trpE) of Buchnera aphidicola subsp. Baizongia pistaciae (strain Bp).